The following is a 342-amino-acid chain: Holliday junction branch migration complex subunit RuvB (342 aa).

The tract at residues 1-179 (MTNILSPEKS…FGIPMRLNFY (179 aa)) is large ATPase domain (RuvB-L). Residues Ile18, Arg19, Gly60, Lys63, Thr64, Thr65, 126 to 128 (EDF), Arg169, Tyr179, and Arg216 contribute to the ATP site. Mg(2+) is bound at residue Thr64. The interval 180 to 250 (NTEELKKVLN…ISDFGLNRLE (71 aa)) is small ATPAse domain (RuvB-S). The segment at 253-342 (CIGLDSNDYR…HQFNIFNENE (90 aa)) is head domain (RuvB-H). Residues Arg289, Arg308, and Arg313 each contribute to the DNA site.

It belongs to the RuvB family. In terms of assembly, homohexamer. Forms an RuvA(8)-RuvB(12)-Holliday junction (HJ) complex. HJ DNA is sandwiched between 2 RuvA tetramers; dsDNA enters through RuvA and exits via RuvB. An RuvB hexamer assembles on each DNA strand where it exits the tetramer. Each RuvB hexamer is contacted by two RuvA subunits (via domain III) on 2 adjacent RuvB subunits; this complex drives branch migration. In the full resolvosome a probable DNA-RuvA(4)-RuvB(12)-RuvC(2) complex forms which resolves the HJ.

The protein localises to the cytoplasm. The enzyme catalyses ATP + H2O = ADP + phosphate + H(+). Its function is as follows. The RuvA-RuvB-RuvC complex processes Holliday junction (HJ) DNA during genetic recombination and DNA repair, while the RuvA-RuvB complex plays an important role in the rescue of blocked DNA replication forks via replication fork reversal (RFR). RuvA specifically binds to HJ cruciform DNA, conferring on it an open structure. The RuvB hexamer acts as an ATP-dependent pump, pulling dsDNA into and through the RuvAB complex. RuvB forms 2 homohexamers on either side of HJ DNA bound by 1 or 2 RuvA tetramers; 4 subunits per hexamer contact DNA at a time. Coordinated motions by a converter formed by DNA-disengaged RuvB subunits stimulates ATP hydrolysis and nucleotide exchange. Immobilization of the converter enables RuvB to convert the ATP-contained energy into a lever motion, pulling 2 nucleotides of DNA out of the RuvA tetramer per ATP hydrolyzed, thus driving DNA branch migration. The RuvB motors rotate together with the DNA substrate, which together with the progressing nucleotide cycle form the mechanistic basis for DNA recombination by continuous HJ branch migration. Branch migration allows RuvC to scan DNA until it finds its consensus sequence, where it cleaves and resolves cruciform DNA. This is Holliday junction branch migration complex subunit RuvB from Rickettsia africae (strain ESF-5).